Consider the following 341-residue polypeptide: Ribosomal RNA small subunit methyltransferase C (341 aa).

It belongs to the methyltransferase superfamily. RsmC family. Monomer.

Its subcellular location is the cytoplasm. The enzyme catalyses guanosine(1207) in 16S rRNA + S-adenosyl-L-methionine = N(2)-methylguanosine(1207) in 16S rRNA + S-adenosyl-L-homocysteine + H(+). Its function is as follows. Specifically methylates the guanine in position 1207 of 16S rRNA in the 30S particle. The polypeptide is Ribosomal RNA small subunit methyltransferase C (Shewanella halifaxensis (strain HAW-EB4)).